Consider the following 21-residue polypeptide: Peptidyl-prolyl cis-trans isomerase (21 aa).

Residues 1-21 (ENFKIKHTEPGLLSMANAGKN) form a disordered region.

Belongs to the cyclophilin-type PPIase family. PPIase A subfamily.

The enzyme catalyses [protein]-peptidylproline (omega=180) = [protein]-peptidylproline (omega=0). In terms of biological role, PPIases accelerate the folding of proteins. It catalyzes the cis-trans isomerization of proline imidic peptide bonds in oligopeptides. The sequence is that of Peptidyl-prolyl cis-trans isomerase from Naegleria fowleri (Brain eating amoeba).